Reading from the N-terminus, the 882-residue chain is Lon protease homolog, mitochondrial (882 aa).

A mitochondrion-targeting transit peptide spans 1 to 34 (MIHVLKSRSTLLTASSIVRTSVGSSSRYSQTRTY). Residues 68-281 (TLGLPLVSRP…KALVLLNRER (214 aa)) enclose the Lon N-terminal domain. Residue 435 to 442 (GPPGTGKT) coordinates ATP. The 192-residue stretch at 687 to 878 (PLPHGIVMGL…DKVYEVAFSS (192 aa)) folds into the Lon proteolytic domain. Residues Ser784 and Lys827 contribute to the active site.

This sequence belongs to the peptidase S16 family. In terms of assembly, homohexamer or homoheptamer. Organized in a ring with a central cavity.

Its subcellular location is the mitochondrion matrix. The enzyme catalyses Hydrolysis of proteins in presence of ATP.. Its function is as follows. ATP-dependent serine protease that mediates the selective degradation of misfolded, unassembled or oxidatively damaged polypeptides as well as certain short-lived regulatory proteins in the mitochondrial matrix. May also have a chaperone function in the assembly of inner membrane protein complexes. Participates in the regulation of mitochondrial gene expression and in the maintenance of the integrity of the mitochondrial genome. Binds to mitochondrial DNA in a site-specific manner. The protein is Lon protease homolog, mitochondrial of Phaeodactylum tricornutum (strain CCAP 1055/1).